A 200-amino-acid chain; its full sequence is Recombination protein RecR (200 aa).

The C4-type zinc-finger motif lies at 58–75; that stretch reads CPTCFCLKSHPESVCSFC. In terms of domain architecture, Toprim spans 82-177; the sequence is SILCIVATPK…SVSRLALGLP (96 aa).

It belongs to the RecR family.

Functionally, may play a role in DNA repair. It seems to be involved in an RecBC-independent recombinational process of DNA repair. It may act with RecF and RecO. The polypeptide is Recombination protein RecR (Chlamydia abortus (strain DSM 27085 / S26/3) (Chlamydophila abortus)).